Reading from the N-terminus, the 668-residue chain is Probable metal-nicotianamine transporter YSL5 (668 aa).

Positions 1-11 (MPPPETSSAAA) are enriched in low complexity. Positions 1-22 (MPPPETSSAAAPSPPSPDPLPP) are disordered. Over residues 12-22 (PSPPSPDPLPP) the composition is skewed to pro residues. 14 helical membrane passes run 27–47 (LTLRGVAVAAVLGSLLCVVIH), 51–71 (LTVGVIPALNVASGLLAFFLA), 102–122 (CAIACGSLAFSGCSSSYIFAM), 147–167 (LGWMIGFMFLIALIGPFSIVM), 209–229 (LVKYMSLSFGWSFFKWFFSGV), 268–288 (IVNCSVFLGSVISWGFLWPFI), 315–335 (IAISVILGDGLYNLVKVFLII), 383–403 (LAVSGYIVLAAISTVAVPIIF), 410–430 (LVLVCYFLAPAIAFCNSYGMG), 443–463 (IALFVFASLVGSDGGVIAGLA), 501–521 (IGVALGCIIAPLTLWLFWTAF), 557–577 (LEICCVFFLAALIINLMKDVV), 595–615 (FYIGAYFGVDMFIGTLILFAW), and 633–653 (GLICGDGVWSIPSAVLSILGV).

This sequence belongs to the YSL (TC 2.A.67.2) family. As to expression, expressed in roots.

It localises to the membrane. Functionally, may be involved in the transport of nicotianamine-chelated metals. The chain is Probable metal-nicotianamine transporter YSL5 (YSL5) from Oryza sativa subsp. japonica (Rice).